Reading from the N-terminus, the 294-residue chain is Indole-3-glycerol phosphate synthase (294 aa).

The protein belongs to the TrpC family.

The enzyme catalyses 1-(2-carboxyphenylamino)-1-deoxy-D-ribulose 5-phosphate + H(+) = (1S,2R)-1-C-(indol-3-yl)glycerol 3-phosphate + CO2 + H2O. The protein operates within amino-acid biosynthesis; L-tryptophan biosynthesis; L-tryptophan from chorismate: step 4/5. The sequence is that of Indole-3-glycerol phosphate synthase from Crocosphaera subtropica (strain ATCC 51142 / BH68) (Cyanothece sp. (strain ATCC 51142)).